A 583-amino-acid chain; its full sequence is 2-succinyl-5-enolpyruvyl-6-hydroxy-3-cyclohexene-1-carboxylate synthase (583 aa).

It belongs to the TPP enzyme family. MenD subfamily. As to quaternary structure, homodimer. Mg(2+) is required as a cofactor. Requires Mn(2+) as cofactor. It depends on thiamine diphosphate as a cofactor.

The catalysed reaction is isochorismate + 2-oxoglutarate + H(+) = 5-enolpyruvoyl-6-hydroxy-2-succinyl-cyclohex-3-ene-1-carboxylate + CO2. It functions in the pathway quinol/quinone metabolism; 1,4-dihydroxy-2-naphthoate biosynthesis; 1,4-dihydroxy-2-naphthoate from chorismate: step 2/7. Its pathway is quinol/quinone metabolism; menaquinone biosynthesis. Its function is as follows. Catalyzes the thiamine diphosphate-dependent decarboxylation of 2-oxoglutarate and the subsequent addition of the resulting succinic semialdehyde-thiamine pyrophosphate anion to isochorismate to yield 2-succinyl-5-enolpyruvyl-6-hydroxy-3-cyclohexene-1-carboxylate (SEPHCHC). The chain is 2-succinyl-5-enolpyruvyl-6-hydroxy-3-cyclohexene-1-carboxylate synthase from Chlorobium phaeovibrioides (strain DSM 265 / 1930) (Prosthecochloris vibrioformis (strain DSM 265)).